A 258-amino-acid polypeptide reads, in one-letter code: Hydroxyacylglutathione hydrolase (258 aa).

Zn(2+)-binding residues include His54, His56, Asp58, His59, His113, Asp138, and His176.

The protein belongs to the metallo-beta-lactamase superfamily. Glyoxalase II family. As to quaternary structure, monomer. Zn(2+) serves as cofactor.

It catalyses the reaction an S-(2-hydroxyacyl)glutathione + H2O = a 2-hydroxy carboxylate + glutathione + H(+). Its pathway is secondary metabolite metabolism; methylglyoxal degradation; (R)-lactate from methylglyoxal: step 2/2. In terms of biological role, thiolesterase that catalyzes the hydrolysis of S-D-lactoyl-glutathione to form glutathione and D-lactic acid. The sequence is that of Hydroxyacylglutathione hydrolase from Synechococcus sp. (strain ATCC 27144 / PCC 6301 / SAUG 1402/1) (Anacystis nidulans).